The chain runs to 227 residues: Cytochrome c oxidase subunit 2 (227 aa).

Over Met1–Ser14 the chain is Mitochondrial intermembrane. Residues Pro15–Met45 traverse the membrane as a helical segment. The Mitochondrial matrix segment spans residues Leu46–Gln59. Residues Glu60–Met87 form a helical membrane-spanning segment. At Asp88–Leu227 the chain is on the mitochondrial intermembrane side. Cu cation-binding residues include His161, Cys196, Glu198, Cys200, His204, and Met207. Mg(2+) is bound at residue Glu198.

This sequence belongs to the cytochrome c oxidase subunit 2 family. As to quaternary structure, component of the cytochrome c oxidase (complex IV, CIV), a multisubunit enzyme composed of 14 subunits. The complex is composed of a catalytic core of 3 subunits MT-CO1, MT-CO2 and MT-CO3, encoded in the mitochondrial DNA, and 11 supernumerary subunits COX4I, COX5A, COX5B, COX6A, COX6B, COX6C, COX7A, COX7B, COX7C, COX8 and NDUFA4, which are encoded in the nuclear genome. The complex exists as a monomer or a dimer and forms supercomplexes (SCs) in the inner mitochondrial membrane with NADH-ubiquinone oxidoreductase (complex I, CI) and ubiquinol-cytochrome c oxidoreductase (cytochrome b-c1 complex, complex III, CIII), resulting in different assemblies (supercomplex SCI(1)III(2)IV(1) and megacomplex MCI(2)III(2)IV(2)). Found in a complex with TMEM177, COA6, COX18, COX20, SCO1 and SCO2. Interacts with TMEM177 in a COX20-dependent manner. Interacts with COX20. Interacts with COX16. The cofactor is Cu cation.

The protein resides in the mitochondrion inner membrane. It catalyses the reaction 4 Fe(II)-[cytochrome c] + O2 + 8 H(+)(in) = 4 Fe(III)-[cytochrome c] + 2 H2O + 4 H(+)(out). Functionally, component of the cytochrome c oxidase, the last enzyme in the mitochondrial electron transport chain which drives oxidative phosphorylation. The respiratory chain contains 3 multisubunit complexes succinate dehydrogenase (complex II, CII), ubiquinol-cytochrome c oxidoreductase (cytochrome b-c1 complex, complex III, CIII) and cytochrome c oxidase (complex IV, CIV), that cooperate to transfer electrons derived from NADH and succinate to molecular oxygen, creating an electrochemical gradient over the inner membrane that drives transmembrane transport and the ATP synthase. Cytochrome c oxidase is the component of the respiratory chain that catalyzes the reduction of oxygen to water. Electrons originating from reduced cytochrome c in the intermembrane space (IMS) are transferred via the dinuclear copper A center (CU(A)) of subunit 2 and heme A of subunit 1 to the active site in subunit 1, a binuclear center (BNC) formed by heme A3 and copper B (CU(B)). The BNC reduces molecular oxygen to 2 water molecules using 4 electrons from cytochrome c in the IMS and 4 protons from the mitochondrial matrix. This chain is Cytochrome c oxidase subunit 2 (MT-CO2), found in Halichoerus grypus (Gray seal).